Consider the following 86-residue polypeptide: Small ribosomal subunit protein bS20 (86 aa).

Positions 1–21 are disordered; the sequence is MANTKSAIKAARKSLRLHDRN.

It belongs to the bacterial ribosomal protein bS20 family.

In terms of biological role, binds directly to 16S ribosomal RNA. This Opitutus terrae (strain DSM 11246 / JCM 15787 / PB90-1) protein is Small ribosomal subunit protein bS20.